The chain runs to 352 residues: Photosystem II D2 protein (352 aa).

The chain crosses the membrane as a helical span at residues 40–60 (CAYMALGGWLTGTTFVTSWYT). His-117 is a chlorophyll a binding site. A helical transmembrane segment spans residues 124 to 140 (GFMLRQFEIARLVGIRP). The pheophytin a site is built by Gln-129 and Asn-142. A helical membrane pass occupies residues 152–165 (VFVSVFLMYPLGQS). His-197 provides a ligand contact to chlorophyll a. The helical transmembrane segment at 207-227 (GALLCAIHGATVENTLFEDGD) threads the bilayer. Residues His-214 and Phe-261 each coordinate a plastoquinone. Residue His-214 coordinates Fe cation. Residue His-268 participates in Fe cation binding. The chain crosses the membrane as a helical span at residues 278-294 (GLWTSSIGIIGLALNLR).

This sequence belongs to the reaction center PufL/M/PsbA/D family. In terms of assembly, PSII is composed of 1 copy each of membrane proteins PsbA, PsbB, PsbC, PsbD, PsbE, PsbF, PsbH, PsbI, PsbJ, PsbK, PsbL, PsbM, PsbT, PsbX, PsbY, PsbZ, Psb30/Ycf12, peripheral proteins PsbO, CyanoQ (PsbQ), PsbU, PsbV and a large number of cofactors. It forms dimeric complexes. The cofactor is The D1/D2 heterodimer binds P680, chlorophylls that are the primary electron donor of PSII, and subsequent electron acceptors. It shares a non-heme iron and each subunit binds pheophytin, quinone, additional chlorophylls, carotenoids and lipids. There is also a Cl(-1) ion associated with D1 and D2, which is required for oxygen evolution. The PSII complex binds additional chlorophylls, carotenoids and specific lipids..

It is found in the cellular thylakoid membrane. It catalyses the reaction 2 a plastoquinone + 4 hnu + 2 H2O = 2 a plastoquinol + O2. Photosystem II (PSII) is a light-driven water:plastoquinone oxidoreductase that uses light energy to abstract electrons from H(2)O, generating O(2) and a proton gradient subsequently used for ATP formation. It consists of a core antenna complex that captures photons, and an electron transfer chain that converts photonic excitation into a charge separation. The D1/D2 (PsbA/PsbD) reaction center heterodimer binds P680, the primary electron donor of PSII as well as several subsequent electron acceptors. D2 is needed for assembly of a stable PSII complex. This chain is Photosystem II D2 protein, found in Synechococcus sp. (strain RCC307).